Here is a 600-residue protein sequence, read N- to C-terminus: Elongation factor 4 (600 aa).

The tr-type G domain occupies 6–188 (QFIRNFSIIA…QITKQIPSPK (183 aa)). GTP-binding positions include 18–23 (DHGKST) and 135–138 (NKID).

The protein belongs to the TRAFAC class translation factor GTPase superfamily. Classic translation factor GTPase family. LepA subfamily.

It localises to the cell inner membrane. It catalyses the reaction GTP + H2O = GDP + phosphate + H(+). Required for accurate and efficient protein synthesis under certain stress conditions. May act as a fidelity factor of the translation reaction, by catalyzing a one-codon backward translocation of tRNAs on improperly translocated ribosomes. Back-translocation proceeds from a post-translocation (POST) complex to a pre-translocation (PRE) complex, thus giving elongation factor G a second chance to translocate the tRNAs correctly. Binds to ribosomes in a GTP-dependent manner. This chain is Elongation factor 4, found in Leptospira interrogans serogroup Icterohaemorrhagiae serovar copenhageni (strain Fiocruz L1-130).